The primary structure comprises 30 residues: Dermaseptin-DI4 (30 aa).

As to expression, expressed by the skin glands.

It is found in the secreted. In terms of biological role, antibacterial activity against Gram-positive bacteria S.aureus and E.faecalis, and Gram-negative bacteria P.aeruginosa and E.coli. In Phyllomedusa distincta (Monkey frog), this protein is Dermaseptin-DI4.